We begin with the raw amino-acid sequence, 184 residues long: UPF0149 protein Avin_47340 (184 aa).

This sequence belongs to the UPF0149 family.

The polypeptide is UPF0149 protein Avin_47340 (Azotobacter vinelandii (strain DJ / ATCC BAA-1303)).